Reading from the N-terminus, the 338-residue chain is Very-long-chain 3-oxoacyl-CoA reductase (338 aa).

The chain crosses the membrane as a helical span at residues 20–40; it reads LSAFLLVMGSIGVGRVIYQTL. NADP(+) contacts are provided by Val66, Asn95, Asp120, Asn147, Tyr214, Lys218, Val247, and Ser249. The active-site Proton donor is Tyr214. The Lowers pKa of active site Tyr role is filled by Lys218.

Belongs to the short-chain dehydrogenases/reductases (SDR) family.

Its subcellular location is the endoplasmic reticulum membrane. The enzyme catalyses a very-long-chain (3R)-3-hydroxyacyl-CoA + NADP(+) = a very-long-chain 3-oxoacyl-CoA + NADPH + H(+). Its pathway is lipid metabolism; fatty acid biosynthesis. In terms of biological role, component of the microsomal membrane bound fatty acid elongation system, which produces the 26-carbon very long-chain fatty acids (VLCFA) from palmitate. Catalyzes the reduction of the 3-ketoacyl-CoA intermediate that is formed in each cycle of fatty acid elongation. VLCFAs serve as precursors for ceramide and sphingolipids. This Laccaria bicolor (strain S238N-H82 / ATCC MYA-4686) (Bicoloured deceiver) protein is Very-long-chain 3-oxoacyl-CoA reductase.